The following is a 108-amino-acid chain: UPF0060 membrane protein SAR2425 (108 aa).

4 helical membrane passes run 5–25 (IFIFILAGLCEIGGGYLIWLW), 31–51 (SSLVGLIGGVILMLYGVIATF), 60–80 (VYAAYGGVFIIMSLIFAMVVD), and 86–106 (KYDVIGAIICIVGVLVMLLPS).

This sequence belongs to the UPF0060 family.

It localises to the cell membrane. This Staphylococcus aureus (strain MRSA252) protein is UPF0060 membrane protein SAR2425.